Here is a 738-residue protein sequence, read N- to C-terminus: uncharacterized protein (738 aa).

Polar residues-rich tracts occupy residues 1–34 (MSSSSKDSSFQVETPVQNILETSTNSELQDQVSS), 140–169 (TSSDFQSKDSLSTTQPSVSGGNGSTSQSPP), and 177–197 (KPFSISNEPVEQETENSSTKD). Disordered regions lie at residues 1–51 (MSSS…AASI) and 140–197 (TSSD…STKD). Positions 363–434 (SRLFLGHLNT…QKLHLEISKI (72 aa)) constitute an RRM domain. The segment at 466 to 487 (YPTSSRKRTRSPLMSKGKSYDR) is disordered.

This is an uncharacterized protein from Schizosaccharomyces pombe (strain 972 / ATCC 24843) (Fission yeast).